A 562-amino-acid chain; its full sequence is Glutamate--tRNA ligase (562 aa).

A 'HIGH' region motif is present at residues 90 to 100 (PNPSGLLHIGH).

It belongs to the class-I aminoacyl-tRNA synthetase family. Glutamate--tRNA ligase type 2 subfamily.

The protein localises to the cytoplasm. It carries out the reaction tRNA(Glu) + L-glutamate + ATP = L-glutamyl-tRNA(Glu) + AMP + diphosphate. Its function is as follows. Catalyzes the attachment of glutamate to tRNA(Glu) in a two-step reaction: glutamate is first activated by ATP to form Glu-AMP and then transferred to the acceptor end of tRNA(Glu). This is Glutamate--tRNA ligase from Nanoarchaeum equitans (strain Kin4-M).